Reading from the N-terminus, the 269-residue chain is Small ribosomal subunit protein eS1 (269 aa).

Disordered stretches follow at residues 1–20 and 249–269; these read MAVGKNKGVSKGGKKGSKKK and AASGVVVDRPEGYEPPVQESV.

The protein belongs to the eukaryotic ribosomal protein eS1 family. Component of the small ribosomal subunit. Mature ribosomes consist of a small (40S) and a large (60S) subunit. The 40S subunit contains about 33 different proteins and 1 molecule of RNA (18S). The 60S subunit contains about 49 different proteins and 3 molecules of RNA (28S, 5.8S and 5S).

It is found in the cytoplasm. This is Small ribosomal subunit protein eS1 from Anopheles darlingi (Mosquito).